We begin with the raw amino-acid sequence, 59 residues long: Chromatin protein Cren7 (59 aa).

This sequence belongs to the Cren7 family. Monomer. In terms of processing, methylated at multiple sites, to varying extents.

The protein resides in the chromosome. It localises to the cytoplasm. Its function is as follows. A chromatin protein, binds double-stranded DNA without sequence specificity. Constrains negative DNA supercoils. The chain is Chromatin protein Cren7 from Pyrobaculum neutrophilum (strain DSM 2338 / JCM 9278 / NBRC 100436 / V24Sta) (Thermoproteus neutrophilus).